The following is a 334-amino-acid chain: Isopentenyl-diphosphate delta-isomerase (334 aa).

Position 5 to 6 (Arg-5 to Lys-6) interacts with substrate. FMN-binding positions include Ala-60–Thr-62, Ser-90, and Asn-117. Position 147 (Gln-147) interacts with substrate. Glu-148 lines the Mg(2+) pocket. Residues Lys-179, Ser-204, Thr-209, Gly-253 to Arg-255, and Ser-274 to Arg-275 each bind FMN.

The protein belongs to the IPP isomerase type 2 family. In terms of assembly, homooctamer. Dimer of tetramers. Requires FMN as cofactor. NADPH serves as cofactor. Mg(2+) is required as a cofactor.

It is found in the cytoplasm. The catalysed reaction is isopentenyl diphosphate = dimethylallyl diphosphate. Involved in the biosynthesis of isoprenoids. Catalyzes the 1,3-allylic rearrangement of the homoallylic substrate isopentenyl (IPP) to its allylic isomer, dimethylallyl diphosphate (DMAPP). The sequence is that of Isopentenyl-diphosphate delta-isomerase from Streptococcus gordonii (strain Challis / ATCC 35105 / BCRC 15272 / CH1 / DL1 / V288).